Consider the following 309-residue polypeptide: Gamma-hemolysin component A (309 aa).

The signal sequence occupies residues 1 to 29; sequence MIKNKILTATLAVGLIAPLANPFIEISKA.

Belongs to the aerolysin family. Toxicity requires sequential binding and synergistic association of a class S and a class F component which form heterooligomeric complexes. HlgA (class S) associates with HlgB (class F) thus forming an AB toxin in strains producing both gamma-hemolysins and leukocidins. HlgA and LukF-PV can also form a complex.

It is found in the secreted. Functionally, toxin that seems to act by forming pores in the membrane of the cell. Has a hemolytic and a leucotoxic activity. The protein is Gamma-hemolysin component A (hlgA) of Staphylococcus aureus (strain MRSA252).